We begin with the raw amino-acid sequence, 447 residues long: Dihydroorotase (447 aa).

The Zn(2+) site is built by histidine 84 and histidine 86. Substrate-binding positions include 86–88 (HLR) and asparagine 118. Positions 174, 201, and 255 each coordinate Zn(2+). Residue asparagine 301 participates in substrate binding. Aspartate 328 serves as a coordination point for Zn(2+). Residue aspartate 328 is part of the active site. Substrate-binding positions include histidine 332 and 346-347 (FG).

This sequence belongs to the metallo-dependent hydrolases superfamily. DHOase family. Class I DHOase subfamily. It depends on Zn(2+) as a cofactor.

The enzyme catalyses (S)-dihydroorotate + H2O = N-carbamoyl-L-aspartate + H(+). The protein operates within pyrimidine metabolism; UMP biosynthesis via de novo pathway; (S)-dihydroorotate from bicarbonate: step 3/3. Its function is as follows. Catalyzes the reversible cyclization of carbamoyl aspartate to dihydroorotate. This is Dihydroorotase from Anaplasma phagocytophilum (strain HZ).